Here is a 27-residue protein sequence, read N- to C-terminus: C-reactive protein P1 (27 aa).

The interval 1–27 is disordered; it reads IPQDLSGKMLTFPKEEDDDDVKLMTPK. Residues 6-27 enclose the Pentraxin (PTX) domain; sequence SGKMLTFPKEEDDDDVKLMTPK.

This sequence belongs to the pentraxin family. Homopentamer. Pentraxin (or pentaxin) have a discoid arrangement of 5 non-covalently bound subunits. Exists as a dimer under reducing conditions. The cofactor is Ca(2+). Post-translationally, glycosylated.

The protein resides in the secreted. In terms of biological role, displays several functions associated with host defense: it promotes agglutination, bacterial capsular swelling, phagocytosis, and complement fixation through its calcium-dependent binding to phosphorylcholine. The sequence is that of C-reactive protein P1 from Gadus morhua (Atlantic cod).